A 596-amino-acid polypeptide reads, in one-letter code: Aspartate--tRNA(Asp/Asn) ligase (596 aa).

E175 is an L-aspartate binding site. The aspartate stretch occupies residues 199-202 (QQYK). The L-aspartate site is built by R221 and H454. Position 221–223 (221–223 (RDE)) interacts with ATP. ATP is bound at residue E488. R495 lines the L-aspartate pocket. 540-543 (GIDR) serves as a coordination point for ATP.

Belongs to the class-II aminoacyl-tRNA synthetase family. Type 1 subfamily. In terms of assembly, homodimer.

The protein resides in the cytoplasm. The enzyme catalyses tRNA(Asx) + L-aspartate + ATP = L-aspartyl-tRNA(Asx) + AMP + diphosphate. Its function is as follows. Aspartyl-tRNA synthetase with relaxed tRNA specificity since it is able to aspartylate not only its cognate tRNA(Asp) but also tRNA(Asn). Reaction proceeds in two steps: L-aspartate is first activated by ATP to form Asp-AMP and then transferred to the acceptor end of tRNA(Asp/Asn). The sequence is that of Aspartate--tRNA(Asp/Asn) ligase from Rhizobium johnstonii (strain DSM 114642 / LMG 32736 / 3841) (Rhizobium leguminosarum bv. viciae).